Consider the following 306-residue polypeptide: Aspartate carbamoyltransferase catalytic subunit (306 aa).

Positions 55 and 56 each coordinate carbamoyl phosphate. L-aspartate is bound at residue Lys-84. Carbamoyl phosphate is bound by residues Arg-105, His-133, and Gln-136. Positions 166 and 227 each coordinate L-aspartate. Carbamoyl phosphate contacts are provided by Leu-265 and Pro-266.

It belongs to the aspartate/ornithine carbamoyltransferase superfamily. ATCase family. As to quaternary structure, heterododecamer (2C3:3R2) of six catalytic PyrB chains organized as two trimers (C3), and six regulatory PyrI chains organized as three dimers (R2).

It catalyses the reaction carbamoyl phosphate + L-aspartate = N-carbamoyl-L-aspartate + phosphate + H(+). It participates in pyrimidine metabolism; UMP biosynthesis via de novo pathway; (S)-dihydroorotate from bicarbonate: step 2/3. In terms of biological role, catalyzes the condensation of carbamoyl phosphate and aspartate to form carbamoyl aspartate and inorganic phosphate, the committed step in the de novo pyrimidine nucleotide biosynthesis pathway. The protein is Aspartate carbamoyltransferase catalytic subunit of Neisseria meningitidis serogroup C / serotype 2a (strain ATCC 700532 / DSM 15464 / FAM18).